Reading from the N-terminus, the 442-residue chain is Adenylosuccinate synthetase (442 aa).

Residues 25-31, 53-55, and Lys-62 each bind GTP; these read GDEGKGK and GHT. The active-site Proton acceptor is Asp-26. Positions 26 and 53 each coordinate Mg(2+). Residues 26–29 and 51–54 contribute to the IMP site; these read DEGK and NAGH. The active-site Proton donor is His-54. Residues Thr-141, Arg-155, Asn-232, and Thr-247 each coordinate IMP. Thr-307 is a binding site for GTP. 307–313 is a binding site for substrate; that stretch reads TTTKRPR. An IMP-binding site is contributed by Arg-311. GTP-binding positions include Arg-313, 339 to 341, and 425 to 427; these read KLD and GVG.

This sequence belongs to the adenylosuccinate synthetase family. In terms of assembly, homodimer. The cofactor is Mg(2+).

The protein localises to the cytoplasm. The enzyme catalyses IMP + L-aspartate + GTP = N(6)-(1,2-dicarboxyethyl)-AMP + GDP + phosphate + 2 H(+). The protein operates within purine metabolism; AMP biosynthesis via de novo pathway; AMP from IMP: step 1/2. In terms of biological role, plays an important role in the salvage pathway for purine nucleotide biosynthesis. Catalyzes the first committed step in the biosynthesis of AMP from IMP. This is Adenylosuccinate synthetase (Adss) from Plasmodium falciparum (isolate 3D7).